Here is a 223-residue protein sequence, read N- to C-terminus: Endonuclease V (223 aa).

Aspartate 35 and aspartate 103 together coordinate Mg(2+).

This sequence belongs to the endonuclease V family. Mg(2+) serves as cofactor.

It is found in the cytoplasm. The enzyme catalyses Endonucleolytic cleavage at apurinic or apyrimidinic sites to products with a 5'-phosphate.. DNA repair enzyme involved in the repair of deaminated bases. Selectively cleaves double-stranded DNA at the second phosphodiester bond 3' to a deoxyinosine leaving behind the intact lesion on the nicked DNA. The chain is Endonuclease V from Salmonella agona (strain SL483).